A 170-amino-acid chain; its full sequence is Tubulin polymerization-promoting protein family member 2 (170 aa).

The tract at residues 127–147 (TGTHKERFDESGKGKGIAGRE) is disordered. A compositionally biased stretch (basic and acidic residues) spans 129-139 (THKERFDESGK).

The protein belongs to the TPPP family.

Its subcellular location is the cytoplasm. The protein resides in the cytosol. It is found in the cell projection. It localises to the cilium. The protein localises to the flagellum. Functionally, probable regulator of microtubule dynamics required for sperm motility. In contrast to other members of the family, has no microtubule bundling activity. The sequence is that of Tubulin polymerization-promoting protein family member 2 (TPPP2) from Macaca fascicularis (Crab-eating macaque).